Consider the following 468-residue polypeptide: 6-phospho-beta-galactosidase (468 aa).

The D-galactose 6-phosphate site is built by Gln-19, His-116, Asn-159, Glu-160, and Asn-297. The Proton donor role is filled by Glu-160. Glu-375 acts as the Nucleophile in catalysis. Residues Ser-428, Trp-429, Lys-435, and Tyr-437 each contribute to the D-galactose 6-phosphate site.

Belongs to the glycosyl hydrolase 1 family.

It catalyses the reaction a 6-phospho-beta-D-galactoside + H2O = D-galactose 6-phosphate + an alcohol. The protein operates within carbohydrate metabolism; lactose degradation; D-galactose 6-phosphate and beta-D-glucose from lactose 6-phosphate: step 1/1. This Streptococcus pyogenes serotype M6 (strain ATCC BAA-946 / MGAS10394) protein is 6-phospho-beta-galactosidase.